We begin with the raw amino-acid sequence, 123 residues long: Large ribosomal subunit protein bL12 (123 aa).

The protein belongs to the bacterial ribosomal protein bL12 family. As to quaternary structure, homodimer. Part of the ribosomal stalk of the 50S ribosomal subunit. Forms a multimeric L10(L12)X complex, where L10 forms an elongated spine to which 2 to 4 L12 dimers bind in a sequential fashion. Binds GTP-bound translation factors.

Functionally, forms part of the ribosomal stalk which helps the ribosome interact with GTP-bound translation factors. Is thus essential for accurate translation. The polypeptide is Large ribosomal subunit protein bL12 (Rhodopseudomonas palustris (strain BisB5)).